The chain runs to 75 residues: Tetrahydromethanopterin S-methyltransferase subunit F (75 aa).

Residues Phe53–Leu73 traverse the membrane as a helical segment.

Belongs to the MtrF family. As to quaternary structure, the complex is composed of 8 subunits; MtrA, MtrB, MtrC, MtrD, MtrE, MtrF, MtrG and MtrH.

The protein resides in the cell membrane. It catalyses the reaction 5-methyl-5,6,7,8-tetrahydromethanopterin + coenzyme M + 2 Na(+)(in) = 5,6,7,8-tetrahydromethanopterin + methyl-coenzyme M + 2 Na(+)(out). It participates in one-carbon metabolism; methanogenesis from CO(2); methyl-coenzyme M from 5,10-methylene-5,6,7,8-tetrahydromethanopterin: step 2/2. In terms of biological role, part of a complex that catalyzes the formation of methyl-coenzyme M and tetrahydromethanopterin from coenzyme M and methyl-tetrahydromethanopterin. This is an energy-conserving, sodium-ion translocating step. The chain is Tetrahydromethanopterin S-methyltransferase subunit F from Methanopyrus kandleri (strain AV19 / DSM 6324 / JCM 9639 / NBRC 100938).